A 582-amino-acid chain; its full sequence is MQDKDLSTVQTFKRLWPIISPFKLGLVVSGIALVINALADAGLISLLKPLLDEGFGKADVSFLRTMSYVVVLVIFLRGISNFISSYCLSWVSGKVVMIMRRRIFKHLMFMPVPFFDQNSSGRLLSRITYDSELVANSSSGALITIVREGAYIISLLAVMLYTSWQLSIVLFLIGPIIAVLIRFVSKRFRELSKNMQNSMGELTSTAEQMLKGHKVVLSFGGQIVEEERFNHVSNDMRRKGMKMAVADAISNPVVQIIASFALAAVLYLATVPTIMDQNLTAGSFTVVFSSMLAMMRPLKSLTNVNAQFQKGMAACQTLFALLDLETEKDLGTHKGENVQGYLSFKNVTFTYQSRDEPALRNLSFDVEKGKTVALVGRSGSGKSTIANLVTRFYDVDQGEITLDGINIQDYRLSSLRKNCAVVSQQVHLFNDTIANNIAYAAKDKYSREEIIKAAKDAYAMEFIEKLEHGLDTVIGENGVNLSGGQRQRLAIARALLRNSPVLILDEATSALDTESERSIQLALEKLQKERTVIVIAHRLSTIENADEILVIEHGEIKERGSHSELLALNGAYKQLHHIQVNH.

The next 5 membrane-spanning stretches (helical) occupy residues 15 to 35, 68 to 88, 140 to 160, 161 to 181, and 254 to 274; these read LWPI…ALVI, YVVV…SYCL, GALI…AVML, YTSW…AVLI, and VQII…VPTI. Residues 27 to 310 form the ABC transmembrane type-1 domain; it reads VVSGIALVIN…LTNVNAQFQK (284 aa). The 237-residue stretch at 342 to 578 folds into the ABC transporter domain; sequence LSFKNVTFTY…NGAYKQLHHI (237 aa). 376–383 is an ATP binding site; that stretch reads GRSGSGKS.

Belongs to the ABC transporter superfamily. Lipid exporter (TC 3.A.1.106) family. As to quaternary structure, homodimer.

The protein resides in the cell inner membrane. It catalyses the reaction ATP + H2O + lipid A-core oligosaccharideSide 1 = ADP + phosphate + lipid A-core oligosaccharideSide 2.. Its function is as follows. Involved in lipopolysaccharide (LPS) biosynthesis. Translocates lipid A-core from the inner to the outer leaflet of the inner membrane. Transmembrane domains (TMD) form a pore in the inner membrane and the ATP-binding domain (NBD) is responsible for energy generation. The protein is ATP-dependent lipid A-core flippase of Pasteurella multocida (strain Pm70).